The following is a 106-amino-acid chain: Large ribosomal subunit protein uL24 (106 aa).

The protein belongs to the universal ribosomal protein uL24 family. As to quaternary structure, part of the 50S ribosomal subunit.

Functionally, one of two assembly initiator proteins, it binds directly to the 5'-end of the 23S rRNA, where it nucleates assembly of the 50S subunit. In terms of biological role, one of the proteins that surrounds the polypeptide exit tunnel on the outside of the subunit. The protein is Large ribosomal subunit protein uL24 of Erythrobacter litoralis (strain HTCC2594).